A 510-amino-acid chain; its full sequence is Cobyric acid synthase (510 aa).

The GATase cobBQ-type domain maps to 249–458; it reads CFKVRVLVYP…LHGLFDSPDA (210 aa). Cys-336 serves as the catalytic Nucleophile. His-450 is an active-site residue.

The protein belongs to the CobB/CobQ family. CobQ subfamily.

It participates in cofactor biosynthesis; adenosylcobalamin biosynthesis. Functionally, catalyzes amidations at positions B, D, E, and G on adenosylcobyrinic A,C-diamide. NH(2) groups are provided by glutamine, and one molecule of ATP is hydrogenolyzed for each amidation. In Shewanella oneidensis (strain ATCC 700550 / JCM 31522 / CIP 106686 / LMG 19005 / NCIMB 14063 / MR-1), this protein is Cobyric acid synthase.